The following is a 169-amino-acid chain: Ribosome maturation factor RimM (169 aa).

Residues 94-167 (ENEFYFHEII…KITIEVMEGL (74 aa)) form the PRC barrel domain.

It belongs to the RimM family. In terms of assembly, binds ribosomal protein uS19.

It localises to the cytoplasm. Its function is as follows. An accessory protein needed during the final step in the assembly of 30S ribosomal subunit, possibly for assembly of the head region. Essential for efficient processing of 16S rRNA. May be needed both before and after RbfA during the maturation of 16S rRNA. It has affinity for free ribosomal 30S subunits but not for 70S ribosomes. In Listeria welshimeri serovar 6b (strain ATCC 35897 / DSM 20650 / CCUG 15529 / CIP 8149 / NCTC 11857 / SLCC 5334 / V8), this protein is Ribosome maturation factor RimM.